The sequence spans 173 residues: Crossover junction endodeoxyribonuclease RuvC (173 aa).

Residues Asp-8, Glu-67, and Asp-139 contribute to the active site. The Mg(2+) site is built by Asp-8, Glu-67, and Asp-139.

The protein belongs to the RuvC family. As to quaternary structure, homodimer which binds Holliday junction (HJ) DNA. The HJ becomes 2-fold symmetrical on binding to RuvC with unstacked arms; it has a different conformation from HJ DNA in complex with RuvA. In the full resolvosome a probable DNA-RuvA(4)-RuvB(12)-RuvC(2) complex forms which resolves the HJ. Requires Mg(2+) as cofactor.

The protein localises to the cytoplasm. It carries out the reaction Endonucleolytic cleavage at a junction such as a reciprocal single-stranded crossover between two homologous DNA duplexes (Holliday junction).. In terms of biological role, the RuvA-RuvB-RuvC complex processes Holliday junction (HJ) DNA during genetic recombination and DNA repair. Endonuclease that resolves HJ intermediates. Cleaves cruciform DNA by making single-stranded nicks across the HJ at symmetrical positions within the homologous arms, yielding a 5'-phosphate and a 3'-hydroxyl group; requires a central core of homology in the junction. The consensus cleavage sequence is 5'-(A/T)TT(C/G)-3'. Cleavage occurs on the 3'-side of the TT dinucleotide at the point of strand exchange. HJ branch migration catalyzed by RuvA-RuvB allows RuvC to scan DNA until it finds its consensus sequence, where it cleaves and resolves the cruciform DNA. This is Crossover junction endodeoxyribonuclease RuvC from Salmonella dublin (strain CT_02021853).